We begin with the raw amino-acid sequence, 884 residues long: DNA replication licensing factor mcm2 (884 aa).

Residues 1 to 16 (MADSSESFNIATSPRT) are compositionally biased toward polar residues. Disordered regions lie at residues 1 to 61 (MADS…IGDA) and 120 to 151 (LYDSDEEDEDRPARKRRMAERAAEGAPEEDEE). Over residues 47–58 (PREEEEDGEELI) the composition is skewed to acidic residues. The segment at 314–340 (CNKCNFILGPFFQSQNQEVKPGSCPEC) adopts a C4-type zinc-finger fold. An MCM domain is found at 458–664 (IGERIFASIA…VQDEMLARFV (207 aa)). ADP is bound by residues Ser-515 and Gln-516. Positions 640 to 643 (SRFD) match the Arginine finger motif.

It belongs to the MCM family. In terms of assembly, component of the mcm2-7 complex (RLF-M). The complex forms a toroidal hexameric ring with the proposed subunit order mcm2-mcm6-mcm4-mcm7-mcm3-mcm5. Component of the replisome complex. Component of the CMG helicase complex, composed of the mcm2-7 complex, the GINS complex and cdc45. Post-translationally, may be in a phosphorylated state in the mitotic mcm complex. Phosphorylated in the interphase mcm complex. Phosphorylated by the cdc7-dbf4 and cdc7-dbf4b complexes.

The protein localises to the nucleus. It is found in the chromosome. The enzyme catalyses ATP + H2O = ADP + phosphate + H(+). In terms of biological role, acts as a component of the MCM2-7 complex (MCM complex) which is the replicative helicase essential for 'once per cell cycle' DNA replication initiation and elongation in eukaryotic cells. Core component of CDC45-MCM-GINS (CMG) helicase, the molecular machine that unwinds template DNA during replication, and around which the replisome is built. The active ATPase sites in the MCM2-7 ring are formed through the interaction surfaces of two neighboring subunits such that a critical structure of a conserved arginine finger motif is provided in trans relative to the ATP-binding site of the Walker A box of the adjacent subunit. The six ATPase active sites, however, are likely to contribute differentially to the complex helicase activity. Required for the entry in S phase and for cell division. The sequence is that of DNA replication licensing factor mcm2 from Xenopus tropicalis (Western clawed frog).